Reading from the N-terminus, the 96-residue chain is Small ribosomal subunit protein bS6 (96 aa).

It belongs to the bacterial ribosomal protein bS6 family.

Its function is as follows. Binds together with bS18 to 16S ribosomal RNA. The protein is Small ribosomal subunit protein bS6 of Bacillus cereus (strain ATCC 10987 / NRS 248).